The primary structure comprises 281 residues: Urease accessory protein UreD 2 (281 aa).

Belongs to the UreD family. UreD, UreF and UreG form a complex that acts as a GTP-hydrolysis-dependent molecular chaperone, activating the urease apoprotein by helping to assemble the nickel containing metallocenter of UreC. The UreE protein probably delivers the nickel.

The protein resides in the cytoplasm. Functionally, required for maturation of urease via the functional incorporation of the urease nickel metallocenter. The protein is Urease accessory protein UreD 2 of Pseudomonas syringae pv. syringae (strain B728a).